A 540-amino-acid polypeptide reads, in one-letter code: MRAHEILNNPFLNKGTAFTMKERQELGLIGLLPPTVQTIEEQAEQTYEQYLTKPSDLEKRHFLMEIFNTNRTLFYYLFNKHIVEFNPVVYDPTIADTIENYSHLFVDPQYAAYLDINHPENITETLKNAAGDREIRLIVVTDAEGILGIGDWGTQGVDISVGKLMIYTAAAGIDPASVLPVVIDAGTNRKELLEDHLYLGNHQERIYGDQYYSFVDQFVETAESIFPKLYLHWEDFGRSNAATILNNYKTKIPTFNDDIQGTGIVVLGGIFGSLDITGEKLTDQVYLCYGGGSAGAGIAGRVHAEMVSEGLSEEEAYKHFFMIDQQGLLFDDMEDLTPAQKPFAKKRADYKDAGDMTDLLNVVKTVKPTILVGTSTNPGAFTKEVVEAMCANTERPVIFPISNPTKKMETTAEQVIEWSDGKAFVATGVPSGTISYKGVDYQIGQANNSLIYPGLGLGMLASEAKLLTDEMIGAAAHSLSGLVDPGKPGAPVLPPFEFVADVSIKVAEAVAKKAQEQGLTESKETDMAKAVRDLKWYPEY.

Tyr-90 functions as the Proton donor in the catalytic mechanism. The active-site Proton acceptor is the Lys-163. Lys-163 contributes to the substrate binding site. Glu-234, Asp-235, and Asp-258 together coordinate Mn(2+). NAD(+) contacts are provided by residues 291-294, Asn-403, and Asn-448; that span reads GGSA. Asn-448 is a binding site for substrate.

The protein belongs to the malic enzymes family. As to quaternary structure, homodimer. Mn(2+) serves as cofactor. It depends on NAD(+) as a cofactor.

It catalyses the reaction (S)-malate + H(+) = (S)-lactate + CO2. Functionally, involved in the malolactic fermentation (MLF) of wine, which results in a natural decrease in acidity and favorable changes in wine flavors. Catalyzes the decarboxylation of L-malate to L-lactate. In Lactococcus lactis subsp. lactis (strain IL1403) (Streptococcus lactis), this protein is Malolactic enzyme.